Consider the following 230-residue polypeptide: Lactate utilization protein C (230 aa).

It belongs to the LutC/YkgG family.

Is involved in L-lactate degradation and allows cells to grow with lactate as the sole carbon source. This is Lactate utilization protein C from Exiguobacterium sp. (strain ATCC BAA-1283 / AT1b).